The sequence spans 393 residues: S-adenosylmethionine synthase 4 (393 aa).

Glu-9 is a Mg(2+) binding site. His-15 contacts ATP. Glu-43 contributes to the K(+) binding site. 2 residues coordinate L-methionine: Glu-56 and Gln-99. ATP is bound by residues 167 to 169 (DGK), 235 to 238 (SGRF), Asp-246, 252 to 253 (RK), Ala-269, Lys-273, and Lys-277. Position 246 (Asp-246) interacts with L-methionine. Lys-277 is a binding site for L-methionine.

Belongs to the AdoMet synthase family. Homotetramer. Requires Mn(2+) as cofactor. Mg(2+) serves as cofactor. The cofactor is Co(2+). It depends on K(+) as a cofactor.

Its subcellular location is the cytoplasm. It carries out the reaction L-methionine + ATP + H2O = S-adenosyl-L-methionine + phosphate + diphosphate. It participates in amino-acid biosynthesis; S-adenosyl-L-methionine biosynthesis; S-adenosyl-L-methionine from L-methionine: step 1/1. Catalyzes the formation of S-adenosylmethionine from methionine and ATP. The reaction comprises two steps that are both catalyzed by the same enzyme: formation of S-adenosylmethionine (AdoMet) and triphosphate, and subsequent hydrolysis of the triphosphate. The protein is S-adenosylmethionine synthase 4 (METK4) of Vitis vinifera (Grape).